Here is a 122-residue protein sequence, read N- to C-terminus: Large ribosomal subunit protein uL14 (122 aa).

Belongs to the universal ribosomal protein uL14 family. Part of the 50S ribosomal subunit. Forms a cluster with proteins L3 and L19. In the 70S ribosome, L14 and L19 interact and together make contacts with the 16S rRNA in bridges B5 and B8.

Its function is as follows. Binds to 23S rRNA. Forms part of two intersubunit bridges in the 70S ribosome. This is Large ribosomal subunit protein uL14 from Neisseria gonorrhoeae (strain ATCC 700825 / FA 1090).